A 190-amino-acid polypeptide reads, in one-letter code: Potassium-transporting ATPase KdpC subunit (190 aa).

The helical transmembrane segment at 10-30 (TFIFLLLITGGVYPLLTTVLG) threads the bilayer.

The protein belongs to the KdpC family. In terms of assembly, the system is composed of three essential subunits: KdpA, KdpB and KdpC.

The protein localises to the cell inner membrane. Part of the high-affinity ATP-driven potassium transport (or Kdp) system, which catalyzes the hydrolysis of ATP coupled with the electrogenic transport of potassium into the cytoplasm. This subunit acts as a catalytic chaperone that increases the ATP-binding affinity of the ATP-hydrolyzing subunit KdpB by the formation of a transient KdpB/KdpC/ATP ternary complex. This Escherichia coli (strain SE11) protein is Potassium-transporting ATPase KdpC subunit.